The following is a 262-amino-acid chain: Ribosome-recycling factor, mitochondrial (262 aa).

A mitochondrion-targeting transit peptide spans 1-55 (MALGLKCFRMVHPTFRNYLAASIRPVSEVTLKTVHERQHGHRQYMAYSAVPVRHF).

This sequence belongs to the RRF family.

It localises to the mitochondrion. Responsible for the disassembly of ribosomes from messenger RNA at the termination of mitochondrial protein biosynthesis. Acts in collaboration with GFM2. Promotes mitochondrial ribosome recycling by dissolution of intersubunit contacts. This is Ribosome-recycling factor, mitochondrial from Homo sapiens (Human).